Reading from the N-terminus, the 248-residue chain is Ribosomal RNA small subunit methyltransferase G (248 aa).

The interval 1–23 is disordered; it reads MFHVKHVGPVEPAAGDPEVPPVA. S-adenosyl-L-methionine is bound by residues Gly93, Leu98, 143 to 144, and Arg161; that span reads AE. The interval 226–248 is disordered; the sequence is VVSARRAKPPHPKSARTGKAGTR. A compositionally biased stretch (basic residues) spans 230 to 248; it reads RRAKPPHPKSARTGKAGTR.

It belongs to the methyltransferase superfamily. RNA methyltransferase RsmG family.

The protein localises to the cytoplasm. Functionally, specifically methylates the N7 position of guanine in position 518 of 16S rRNA. This Mycolicibacterium paratuberculosis (strain ATCC BAA-968 / K-10) (Mycobacterium paratuberculosis) protein is Ribosomal RNA small subunit methyltransferase G.